The primary structure comprises 179 residues: Large ribosomal subunit protein uL6 (179 aa).

Belongs to the universal ribosomal protein uL6 family. In terms of assembly, part of the 50S ribosomal subunit.

Its function is as follows. This protein binds to the 23S rRNA, and is important in its secondary structure. It is located near the subunit interface in the base of the L7/L12 stalk, and near the tRNA binding site of the peptidyltransferase center. This is Large ribosomal subunit protein uL6 from Prochlorococcus marinus (strain MIT 9313).